The sequence spans 324 residues: Glyoxylate/hydroxypyruvate reductase B (324 aa).

Catalysis depends on residues Arg-237 and Glu-266. His-285 (proton donor) is an active-site residue.

The protein belongs to the D-isomer specific 2-hydroxyacid dehydrogenase family. GhrB subfamily. In terms of assembly, homodimer.

It localises to the cytoplasm. The catalysed reaction is glycolate + NADP(+) = glyoxylate + NADPH + H(+). It catalyses the reaction (R)-glycerate + NAD(+) = 3-hydroxypyruvate + NADH + H(+). It carries out the reaction (R)-glycerate + NADP(+) = 3-hydroxypyruvate + NADPH + H(+). Catalyzes the NADPH-dependent reduction of glyoxylate and hydroxypyruvate into glycolate and glycerate, respectively. In Shigella sonnei (strain Ss046), this protein is Glyoxylate/hydroxypyruvate reductase B.